Here is a 186-residue protein sequence, read N- to C-terminus: dCTP deaminase (186 aa).

Residue 107 to 112 (KSSYAR) coordinates dCTP. The active-site Proton donor/acceptor is Glu133. DCTP-binding residues include Gln152, Tyr166, and Gln176.

It belongs to the dCTP deaminase family. As to quaternary structure, homotrimer.

The catalysed reaction is dCTP + H2O + H(+) = dUTP + NH4(+). It functions in the pathway pyrimidine metabolism; dUMP biosynthesis; dUMP from dCTP (dUTP route): step 1/2. Catalyzes the deamination of dCTP to dUTP. The polypeptide is dCTP deaminase (Chloroflexus aurantiacus (strain ATCC 29366 / DSM 635 / J-10-fl)).